The primary structure comprises 188 residues: Methylamine dehydrogenase light chain (188 aa).

The tat-type signal signal peptide spans 1 to 57; it reads MLGNFRFDDMVEKLSRRVAGQTSRRSVIGKLGTAMLGIGLVPLLPVDRRGRVSRANA. Intrachain disulfides connect Cys80-Cys145, Cys86-Cys118, Cys93-Cys178, Cys95-Cys143, Cys103-Cys134, and Cys135-Cys166. Trp114 is modified (tryptophylquinone). The tryptophan tryptophylquinone (Trp-Trp) cross-link spans 114–165; the sequence is WVASCYNPTDGQSYLIAYRDCCGYNVSGRCPCLNTEGELPVYRPEFANDIIW.

The protein belongs to the aromatic amine dehydrogenase light chain family. As to quaternary structure, heterotetramer of two light and two heavy chains. It depends on tryptophan tryptophylquinone residue as a cofactor. In terms of processing, predicted to be exported by the Tat system. The position of the signal peptide cleavage has not been experimentally proven. Post-translationally, tryptophan tryptophylquinone (TTQ) is formed by oxidation of the indole ring of a tryptophan to form tryptophylquinone followed by covalent cross-linking with another tryptophan residue.

It is found in the periplasm. It carries out the reaction 2 oxidized [amicyanin] + methylamine + H2O = 2 reduced [amicyanin] + formaldehyde + NH4(+) + 2 H(+). The protein operates within one-carbon metabolism; methylamine degradation; formaldehyde from methylamine: step 1/1. Methylamine dehydrogenase carries out the oxidation of methylamine. Electrons are passed from methylamine dehydrogenase to amicyanin. This is Methylamine dehydrogenase light chain (mauA) from Paracoccus denitrificans.